Here is a 188-residue protein sequence, read N- to C-terminus: Large ribosomal subunit protein eL18z (188 aa).

The protein belongs to the eukaryotic ribosomal protein eL18 family.

This Arabidopsis thaliana (Mouse-ear cress) protein is Large ribosomal subunit protein eL18z (RPL18A).